Reading from the N-terminus, the 400-residue chain is Glycine betaine/proline betaine transport system ATP-binding protein ProV (400 aa).

An ABC transporter domain is found at 29-265 (LSKEQILEKT…PANDYVRTFF (237 aa)). Position 61–68 (61–68 (GLSGSGKS)) interacts with ATP. 2 consecutive CBS domains span residues 280 to 341 (ARRS…GIEA) and 343 to 400 (LIDD…GNNG).

It belongs to the ABC transporter superfamily. The complex is composed of two ATP-binding proteins (ProV), two transmembrane proteins (ProW) and a solute-binding protein (ProX).

The protein localises to the cell inner membrane. Its function is as follows. Part of the ProU ABC transporter complex involved in glycine betaine and proline betaine uptake. Probably responsible for energy coupling to the transport system. The chain is Glycine betaine/proline betaine transport system ATP-binding protein ProV from Salmonella typhimurium (strain LT2 / SGSC1412 / ATCC 700720).